Here is a 164-residue protein sequence, read N- to C-terminus: Interferon gamma (164 aa).

Residues 1–19 form the signal peptide; the sequence is MTCQTYNLFVLSVIMIYYG. N-linked (GlcNAc...) asparagine glycans are attached at residues N42 and N61.

The protein belongs to the type II (or gamma) interferon family. In terms of assembly, homodimer.

It is found in the secreted. In terms of biological role, produced by lymphocytes activated by specific antigens or mitogens. IFN-gamma, in addition to having antiviral activity, has important immunoregulatory functions. It is a potent activator of macrophages, it has antiproliferative effects on transformed cells and it can potentiate the antiviral and antitumor effects of the type I interferons. The sequence is that of Interferon gamma (IFNG) from Coturnix japonica (Japanese quail).